The following is a 296-amino-acid chain: Cytochrome bc1 complex cytochrome c subunit (296 aa).

Positions M1 to A19 are enriched in polar residues. A disordered region spans residues M1–K27. The chain crosses the membrane as a helical span at residues V32 to I52. 2 consecutive Cytochrome c domains span residues A67 to G147 and L177 to K255. Positions 80, 83, 84, 190, 193, and 194 each coordinate heme c. The chain crosses the membrane as a helical span at residues G274–S294.

In terms of assembly, the cytochrome bc1 complex is composed of a cytochrome b (QcrB), the Rieske iron-sulfur protein (QcrA) and a diheme cytochrome c (QcrC) subunit. The bc1 complex forms a supercomplex with cytochrome c oxidase (cytochrome aa3). Post-translationally, binds 2 heme c groups covalently per subunit.

The protein resides in the cell membrane. It carries out the reaction a quinol + 2 Fe(III)-[cytochrome c](out) = a quinone + 2 Fe(II)-[cytochrome c](out) + 2 H(+)(out). Its function is as follows. Cytochrome c1 subunit of the cytochrome bc1 complex, an essential component of the respiratory electron transport chain required for ATP synthesis. The bc1 complex catalyzes the oxidation of menaquinol and the reduction of cytochrome c in the respiratory chain. The bc1 complex operates through a Q-cycle mechanism that couples electron transfer to generation of the proton gradient that drives ATP synthesis. This Corynebacterium efficiens (strain DSM 44549 / YS-314 / AJ 12310 / JCM 11189 / NBRC 100395) protein is Cytochrome bc1 complex cytochrome c subunit (qcrC).